The sequence spans 91 residues: Phosphocarrier protein NPr (91 aa).

In terms of domain architecture, HPr spans 3-90 (KLERQVTICN…ALVDAKFDEA (88 aa)). Histidine 17 (pros-phosphohistidine intermediate) is an active-site residue.

It belongs to the HPr family.

The protein resides in the cytoplasm. Its function is as follows. Component of the phosphoenolpyruvate-dependent nitrogen-metabolic phosphotransferase system (nitrogen-metabolic PTS), that seems to be involved in regulating nitrogen metabolism. The phosphoryl group from phosphoenolpyruvate (PEP) is transferred to the phosphoryl carrier protein NPr by enzyme I-Ntr. Phospho-NPr then transfers it to EIIA-Ntr. Could function in the transcriptional regulation of sigma-54 dependent operons in conjunction with the NPr (PtsO) and EIIA-Ntr (PtsN) proteins. The protein is Phosphocarrier protein NPr (ptsO) of Shewanella violacea (strain JCM 10179 / CIP 106290 / LMG 19151 / DSS12).